A 790-amino-acid chain; its full sequence is Tumor necrosis factor alpha-induced protein 3 (790 aa).

Ala2 carries the N-acetylalanine modification. A TRAF-binding region spans residues 58 to 300 (PQFREIIHKA…LTDPENEMKE (243 aa)). One can recognise an OTU domain in the interval 92–263 (LVALKTNGDG…SHHFVPLVTL (172 aa)). Residue Asp100 is part of the active site. Cys103 functions as the Nucleophile in the catalytic mechanism. Interaction with ubiquitin regions lie at residues 157–159 (LCY), 190–192 (SLE), and 224–227 (FAPL). His256 (proton acceptor) is an active-site residue. Residues 357–368 (QENSEQGRREGH) are compositionally biased toward basic and acidic residues. Residues 357–377 (QENSEQGRREGHAQNPMEPSV) form a disordered region. An interaction with TNIP1 region spans residues 369-775 (AQNPMEPSVP…ACDHFGNAKC (407 aa)). An A20-type 1 zinc finger spans residues 381–416 (SLMDVKCETPNCPFFMSVNTQPLCHECSERRQKNQN). Residues 386 to 453 (KCETPNCPFF…EPLAWNPEES (68 aa)) form an interaction with RIPK1 region. Positions 387, 392, 404, and 407 each coordinate Zn(2+). Disordered stretches follow at residues 415–434 (QNKL…PGMA) and 447–468 (AWNP…PSPF). A Phosphoserine modification is found at Ser459. 2 A20-type zinc fingers span residues 472 to 507 (ETTA…LHAS) and 515 to 548 (HLDP…AEAS). Zn(2+)-binding residues include Cys478, Cys483, Cys495, Cys498, Cys521, Cys524, Cys536, and Cys539. A disordered region spans residues 550-583 (SLSTSLPPSCHQRSKSDPSRLVRSPSPHSCHRAG). The residue at position 575 (Ser575) is a Phosphoserine. The A20-type 4 zinc-finger motif lies at 601 to 636 (RTGTSKCRKAGCVYFGTPENKGFCTLCFIEYRENKH). The required for proteasomal degradation of UBE2N and UBE2D3, TRAF6 deubiquitination, and TAX1BP1 interaction with UBE2N stretch occupies residues 605 to 655 (SKCRKAGCVYFGTPENKGFCTLCFIEYRENKHFAAASGKVSPTASRFQNTI). Residues 606 to 790 (KCRKAGCVYF…ECFQFKQMYG (185 aa)) are sufficient for inhibitory activity of TNF-induced NF-kappa-B activity. Cys607, Cys612, Cys624, and Cys627 together coordinate Zn(2+). Phosphoserine is present on Ser645. The segment at 651–686 (FQNTIPCLGRECGTLGSTMFEGYCQKCFIEAQNQRF) adopts an A20-type 5 zinc-finger fold. Positions 657, 662, 674, and 677 each coordinate Zn(2+). Residues 689 to 705 (AKRTEEQLRSSQRRDVP) are compositionally biased toward basic and acidic residues. A disordered region spans residues 689–712 (AKRTEEQLRSSQRRDVPRTTQSTS). Positions 697–790 (RSSQRRDVPR…ECFQFKQMYG (94 aa)) are required for lysosomal localization and for TRAF2 lysosomal degradation. 2 A20-type zinc fingers span residues 710 to 745 (STSR…RMGP) and 756 to 790 (DPPK…QMYG). Residues Cys716, Cys721, Cys733, Cys736, Cys762, Cys767, Cys779, and Cys782 each coordinate Zn(2+).

The protein belongs to the peptidase C64 family. Homodimer. Interacts with TNIP1, TAX1BP1 and TRAF2. Interacts with RNF11, ITCH and TAX1BP1 only after TNF stimulation; these interaction are transient and they are lost after 1 hour of stimulation with TNF. Interacts with YWHAZ and YWHAH. Interacts with IKBKG; the interaction is induced by TNF stimulation and by polyubiquitin. Interacts with RIPK1. Interacts with UBE2N; the interaction requires TAX1BP1. Interacts with TRAF6; the interaction is inhibited by HTLV-1 protein Tax. Post-translationally, proteolytically cleaved by MALT1 upon TCR stimulation; disrupts NF-kappa-B inhibitory function and results in increased IL-2 production. It is proposed that only a fraction of TNFAIP3 colocalized with TCR and CBM complex is cleaved, leaving the main TNFAIP3 pool intact.

The protein resides in the cytoplasm. Its subcellular location is the nucleus. The protein localises to the lysosome. It carries out the reaction Thiol-dependent hydrolysis of ester, thioester, amide, peptide and isopeptide bonds formed by the C-terminal Gly of ubiquitin (a 76-residue protein attached to proteins as an intracellular targeting signal).. In terms of biological role, ubiquitin-editing enzyme that contains both ubiquitin ligase and deubiquitinase activities. Involved in immune and inflammatory responses signaled by cytokines, such as TNF-alpha and IL-1 beta, or pathogens via Toll-like receptors (TLRs) through terminating NF-kappa-B activity. Essential component of a ubiquitin-editing protein complex, comprising also RNF11, ITCH and TAX1BP1, that ensures the transient nature of inflammatory signaling pathways. In cooperation with TAX1BP1 promotes disassembly of E2-E3 ubiquitin protein ligase complexes in IL-1R and TNFR-1 pathways; affected are at least E3 ligases TRAF6, TRAF2 and BIRC2, and E2 ubiquitin-conjugating enzymes UBE2N and UBE2D3. In cooperation with TAX1BP1 promotes ubiquitination of UBE2N and proteasomal degradation of UBE2N and UBE2D3. Upon TNF stimulation, deubiquitinates 'Lys-63'-polyubiquitin chains on RIPK1 and catalyzes the formation of 'Lys-48'-polyubiquitin chains. This leads to RIPK1 proteasomal degradation and consequently termination of the TNF- or LPS-mediated activation of NF-kappa-B. Deubiquitinates TRAF6 probably acting on 'Lys-63'-linked polyubiquitin. Upon T-cell receptor (TCR)-mediated T-cell activation, deubiquitinates 'Lys-63'-polyubiquitin chains on MALT1 thereby mediating disassociation of the CBM (CARD11:BCL10:MALT1) and IKK complexes and preventing sustained IKK activation. Deubiquitinates NEMO/IKBKG; the function is facilitated by TNIP1 and leads to inhibition of NF-kappa-B activation. Upon stimulation by bacterial peptidoglycans, probably deubiquitinates RIPK2. Can also inhibit I-kappa-B-kinase (IKK) through a non-catalytic mechanism which involves polyubiquitin; polyubiquitin promotes association with IKBKG and prevents IKK MAP3K7-mediated phosphorylation. Targets TRAF2 for lysosomal degradation. In vitro able to deubiquitinate 'Lys-11'-, 'Lys-48'- and 'Lys-63' polyubiquitin chains. Inhibitor of programmed cell death. Has a role in the function of the lymphoid system. Required for LPS-induced production of pro-inflammatory cytokines and IFN beta in LPS-tolerized macrophages. The sequence is that of Tumor necrosis factor alpha-induced protein 3 (TNFAIP3) from Homo sapiens (Human).